Consider the following 405-residue polypeptide: Accessory Sec system protein translocase subunit SecY2 (405 aa).

The next 10 helical transmembrane spans lie at 14–34, 65–85, 104–124, 131–151, 156–176, 191–211, 247–267, 285–305, 343–363, and 368–388; these read LFTSFLLFIYVLGSRIILPFV, IFSVGLSPWMSAMILWQMFSF, MYLTLLIAVIQSLAVSLRLPV, ILVVLMNTILLIAGTFFLVWL, ASMGIGGSIVILLSSMVLNIP, GIIVLLALLTLVFSYLLALMY, MYVMSFLSVPAYLFILLGFIF, PLWVYVYISVLFLFSIIFAFV, FSVIGGLFNVIMAGGPMLFVL, and LLRLAMIPGLFMMFGGMIFTI.

The protein belongs to the SecY/SEC61-alpha family. SecY2 subfamily. In terms of assembly, component of the accessory SecA2/SecY2 protein translocase complex required to export cell wall proteins. May form heterotrimers with SecE and SecG subunits.

The protein resides in the cell membrane. In terms of biological role, part of the accessory SecA2/SecY2 system specifically required for export of possible cell wall proteins. The central subunit of a protein translocation channel. The protein is Accessory Sec system protein translocase subunit SecY2 of Streptococcus pneumoniae serotype 4 (strain ATCC BAA-334 / TIGR4).